The following is a 665-amino-acid chain: Alpha-1,4-glucan:maltose-1-phosphate maltosyltransferase (665 aa).

Residues Lys-255, Gln-315, and Asp-350 each coordinate alpha-maltose 1-phosphate. Asp-386 serves as the catalytic Nucleophile. Residue Asn-387 coordinates alpha-maltose 1-phosphate. The Proton donor role is filled by Glu-415. 526–527 (KY) contacts alpha-maltose 1-phosphate.

This sequence belongs to the glycosyl hydrolase 13 family. GlgE subfamily. As to quaternary structure, homodimer.

The enzyme catalyses alpha-maltose 1-phosphate + [(1-&gt;4)-alpha-D-glucosyl](n) = [(1-&gt;4)-alpha-D-glucosyl](n+2) + phosphate. Maltosyltransferase that uses maltose 1-phosphate (M1P) as the sugar donor to elongate linear or branched alpha-(1-&gt;4)-glucans. Is involved in a branched alpha-glucan biosynthetic pathway from trehalose, together with TreS, Mak and GlgB. This is Alpha-1,4-glucan:maltose-1-phosphate maltosyltransferase from Myxococcus xanthus (strain DK1622).